Here is a 505-residue protein sequence, read N- to C-terminus: Lysine--tRNA ligase (505 aa).

2 residues coordinate Mg(2+): Glu-415 and Glu-422.

It belongs to the class-II aminoacyl-tRNA synthetase family. In terms of assembly, homodimer. Mg(2+) serves as cofactor.

The protein resides in the cytoplasm. The catalysed reaction is tRNA(Lys) + L-lysine + ATP = L-lysyl-tRNA(Lys) + AMP + diphosphate. This Shigella flexneri protein is Lysine--tRNA ligase.